A 474-amino-acid chain; its full sequence is Probable CAAX prenyl protease 1 (474 aa).

3 consecutive transmembrane segments (helical) span residues S103–Y123, I196–V216, and F230–P250. H332 provides a ligand contact to Zn(2+). The active site involves E333. H336 provides a ligand contact to Zn(2+). 2 helical membrane-spanning segments follow: residues I344–I364 and V381–F401. E411 contributes to the Zn(2+) binding site. Catalysis depends on D415, which acts as the Proton donor.

The protein belongs to the peptidase M48A family. It depends on Zn(2+) as a cofactor.

Its subcellular location is the endoplasmic reticulum membrane. The enzyme catalyses Hydrolyzes the peptide bond -P2-(S-farnesyl or geranylgeranyl)C-P1'-P2'-P3'-COOH where P1' and P2' are amino acids with aliphatic side chains and P3' is any C-terminal residue.. Its function is as follows. Proteolytically removes the C-terminal three residues of farnesylated proteins. The protein is Probable CAAX prenyl protease 1 of Schizosaccharomyces pombe (strain 972 / ATCC 24843) (Fission yeast).